Consider the following 798-residue polypeptide: Probable serine/threonine-protein kinase DDB_G0276461 (798 aa).

The Protein kinase domain occupies 54-324 (VTEVKLVAEG…DLLNYLNEIR (271 aa)). ATP-binding positions include 60 to 68 (VAEGGFGFV) and Lys-82. Asp-185 acts as the Proton acceptor in catalysis. 3 disordered regions span residues 330-538 (GLQT…NGNF), 553-645 (TNGS…SYNN), and 659-798 (SSAS…FGIL). Composition is skewed to low complexity over residues 335 to 406 (SSNN…NTPN), 429 to 490 (SNSN…NNNN), 506 to 538 (PSPS…NGNF), 557 to 603 (TNFE…INNS), 611 to 642 (SSGS…NSGS), and 659 to 678 (SSAS…NSWN). The span at 679-697 (VTLTPSQSNKNSTGNLKPL) shows a compositional bias: polar residues. Over residues 698-716 (NNNNNNNNNNNNRFANNTN) the composition is skewed to low complexity. Residues 717–769 (SSRDYSFDFSSPNTSNNNDFGSFVQPSSSSSLNTTHFSKPNYNVNLNQTTSMT) show a composition bias toward polar residues. The span at 770–790 (NNYNNNNYNNNNNSNNNNNNS) shows a compositional bias: low complexity.

This sequence belongs to the protein kinase superfamily. Ser/Thr protein kinase family.

It catalyses the reaction L-seryl-[protein] + ATP = O-phospho-L-seryl-[protein] + ADP + H(+). It carries out the reaction L-threonyl-[protein] + ATP = O-phospho-L-threonyl-[protein] + ADP + H(+). The chain is Probable serine/threonine-protein kinase DDB_G0276461 from Dictyostelium discoideum (Social amoeba).